The sequence spans 326 residues: Malate dehydrogenase (326 aa).

11-17 (GAAGQIG) lines the NAD(+) pocket. Substrate contacts are provided by Arg-92 and Arg-98. NAD(+) contacts are provided by residues Asn-105, Gln-112, and 129 to 131 (VGN). Substrate contacts are provided by Asn-131 and Arg-162. His-187 (proton acceptor) is an active-site residue.

The protein belongs to the LDH/MDH superfamily. MDH type 2 family.

The catalysed reaction is (S)-malate + NAD(+) = oxaloacetate + NADH + H(+). In terms of biological role, catalyzes the reversible oxidation of malate to oxaloacetate. The chain is Malate dehydrogenase from Alkalilimnicola ehrlichii (strain ATCC BAA-1101 / DSM 17681 / MLHE-1).